Consider the following 121-residue polypeptide: Large ribosomal subunit protein uL24 (121 aa).

The protein belongs to the universal ribosomal protein uL24 family. Part of the 50S ribosomal subunit.

In terms of biological role, one of two assembly initiator proteins, it binds directly to the 5'-end of the 23S rRNA, where it nucleates assembly of the 50S subunit. Its function is as follows. Located at the polypeptide exit tunnel on the outside of the subunit. The sequence is that of Large ribosomal subunit protein uL24 from Methanocorpusculum labreanum (strain ATCC 43576 / DSM 4855 / Z).